Reading from the N-terminus, the 87-residue chain is Type 3 secretion system needle filament protein (87 aa).

The protein belongs to the SctF family. In terms of assembly, the core secretion machinery of the T3SS is composed of approximately 20 different proteins, including cytoplasmic components, a base, an export apparatus and a needle. This subunit polymerizes and forms the helical needle filament. Forms high-order oligomers in vitro. Forms a stable ternary complex with the YscE-YscG chaperone. Interacts directly with YscG but makes very little direct contact with YscE. Interacts with the needle adapter protein YscI/SctI.

The protein localises to the secreted. It localises to the cell surface. With respect to regulation, the secretion and/or polymerization may be controlled by the type III secretion system regulator YopR. Interaction with YscE-YscG chaperone prevents premature polymerization of YscF/SctF in the bacterial cytosol and is required for its stability and efficient secretion. Interaction with the needle adapter protein YscI/SctI is required for YscF/SctF secretion, needle assembly and Yop secretion. The N-terminus varies among bacterial species, not only in amino acid composition but also in the number of amino acids, and may function in manipulating the host response to the advantage of the bacteria. In Y.pestis, the N-terminus can function to decrease cytokine induction, perhaps contributing to a favorable immune environment leading to survival of Y.pestis within the eukaryotic host. Its function is as follows. Component of the type III secretion system (T3SS), also called injectisome, which is used to inject bacterial effector proteins into eukaryotic host cells. YscF/SctF forms the external needle filament that protrudes from the bacterial surface. Essential for the calcium-dependent regulation of T3SS and Yop secretion. Required to block Yop secretion in the presence of extracellular calcium. May be the extracellular T3SS component that senses extracellular calcium and/or participates in transmitting the calcium signal to the cytoplasmic compartment where the block in secretion is initiated. Functionally, during infection, can induce innate immune responses. The needle proteins interact with host TLR2 or TLR4, and induce signaling by NF-kappa-B and/or AP-1. This activation is MyD88 dependent and results in increased expression of cytokines, including TNF-alpha, IL-6 and IL-8. Innate immune responses are modulated by the N-terminal region of YscF/SctF. The polypeptide is Type 3 secretion system needle filament protein (Yersinia pestis).